The primary structure comprises 507 residues: Maturase K (507 aa).

Belongs to the intron maturase 2 family. MatK subfamily.

It localises to the plastid. It is found in the chloroplast. In terms of biological role, usually encoded in the trnK tRNA gene intron. Probably assists in splicing its own and other chloroplast group II introns. In Persea americana (Avocado), this protein is Maturase K.